The primary structure comprises 337 residues: CMP-sialic acid transporter (337 aa).

The Cytoplasmic segment spans residues 1–9 (MAAPRDNVT). The chain crosses the membrane as a helical span at residues 10-30 (LLFKLYCLAVMTLMAAVYTIA). At 31–45 (LRYTRTSDKELYFST) the chain is on the lumenal side. The chain crosses the membrane as a helical span at residues 46-64 (TAVCITEVIKLLLSVGILA). Residue lysine 55 participates in CMP-N-acetyl-beta-neuraminate binding. At 65-87 (KETGSLGRFKASLRENVLGSPKE) the chain is on the cytoplasmic side. The chain crosses the membrane as a helical span at residues 88–108 (LLKLSVPSLVYAVQNNMAFLA). A CMP-N-acetyl-beta-neuraminate-binding site is contributed by 101 to 102 (QN). Residues 109 to 114 (LSNLDA) are Lumenal-facing. Residues 115–135 (AVYQVTYQLKIPCTALCTVLM) traverse the membrane as a helical segment. 117 to 124 (YQVTYQLK) lines the CMP-N-acetyl-beta-neuraminate pocket. The Cytoplasmic segment spans residues 136–141 (LNRTLS). Residues 142-160 (KLQWVSVFMLCAGVTLVQW) traverse the membrane as a helical segment. At 161–175 (KPAQATKVVVEQNPL) the chain is on the lumenal side. The helical transmembrane segment at 176–196 (LGFGAIAIAVLCSGFAGVYFE) threads the bilayer. Residue serine 188 coordinates CMP-N-acetyl-beta-neuraminate. Topologically, residues 197 to 209 (KVLKSSDTSLWVR) are cytoplasmic. 210 to 214 (NIQMY) lines the CMP-N-acetyl-beta-neuraminate pocket. The helical transmembrane segment at 210 to 228 (NIQMYLSGIIVTLAGVYLS) threads the bilayer. Residues 229 to 243 (DGAEIKEKGFFYGYT) are Lumenal-facing. The helical transmembrane segment at 244–262 (YYVWFVIFLASVGGLYTSV) threads the bilayer. Topologically, residues 263–269 (VVKYTDN) are cytoplasmic. A helical transmembrane segment spans residues 270-288 (IMKGFSAAAAIVLSTIASV). Lysine 272 provides a ligand contact to CMP-N-acetyl-beta-neuraminate. At 289 to 296 (MLFGLQIT) the chain is on the lumenal side. A helical transmembrane segment spans residues 297–315 (LTFALGTLLVCVSIYLYGL). At 316 to 337 (PRQDTTSIQQGETASKERVIGV) the chain is on the cytoplasmic side. Residues 316–337 (PRQDTTSIQQGETASKERVIGV) form a disordered region.

Belongs to the nucleotide-sugar transporter family. SLC35A subfamily. In terms of assembly, monomer.

Its subcellular location is the golgi apparatus membrane. It is found in the golgi apparatus. The catalysed reaction is CMP-N-acetyl-beta-neuraminate(in) + CMP(out) = CMP-N-acetyl-beta-neuraminate(out) + CMP(in). It carries out the reaction CMP-N-acetyl-beta-neuraminate(in) + AMP(out) = CMP-N-acetyl-beta-neuraminate(out) + AMP(in). The enzyme catalyses CDP-L-ribitol(in) + CDP(out) = CDP-L-ribitol(out) + CDP(in). It catalyses the reaction UMP(out) + CMP-N-acetyl-beta-neuraminate(in) = UMP(in) + CMP-N-acetyl-beta-neuraminate(out). Functionally, transports CMP-sialic acid from the cytosol into the Golgi apparatus, functioning as an antiporter that exchanges CMP-sialic acid for CMP. Binds both CMP-sialic acid and free CMP, but has higher affinity for free CMP. Also able to exchange CMP-sialic acid for AMP and UMP. Also mediates the transport of CDP-ribitol. The chain is CMP-sialic acid transporter from Homo sapiens (Human).